The primary structure comprises 1311 residues: Cyclin-G-associated kinase (1311 aa).

S2 carries the N-acetylserine modification. S2 and S16 each carry phosphoserine. A Protein kinase domain is found at 40–314 (LRVRRVLAEG…SIAEVVHQLQ (275 aa)). D173 acts as the Proton acceptor in catalysis. One can recognise a Phosphatase tensin-type domain in the interval 399–566 (SVANYAKGDL…EYMCDMVAEE (168 aa)). Phosphoserine is present on S456. Residues 572–710 (SKPILVRAVV…FQVNLEVEVE (139 aa)) enclose the C2 tensin-type domain. Disordered regions lie at residues 709–729 (VEPRDRPSREAPPWENSSMRG) and 749–788 (FGKPELPRQPGSTAQYDAGAGSPEAEPTDSDSPPSSSADA). Position 770 is a phosphoserine (S770). The segment covering 770-788 (SPEAEPTDSDSPPSSSADA) has biased composition (low complexity). Residue T776 is modified to Phosphothreonine. Residue S783 is modified to Phosphoserine. A Phosphothreonine modification is found at T794. Disordered regions lie at residues 801-860 (KEAE…VQQD), 913-1035 (CLLG…DLLG), and 1047-1150 (AVAP…PNYA). Phosphoserine occurs at positions 811, 826, 829, 834, and 939. Composition is skewed to low complexity over residues 925–939 (PPEDLLSEDPLLLAS) and 950–966 (PRGGPPAAADPFGPLLP). Polar residues-rich tracts occupy residues 967–976 (SSGNNSQPCS) and 1070–1080 (SQASWTKSQNP). Position 1096 is a phosphoserine (S1096). Positions 1109-1124 (TATTPKGSSSWQTSRP) are enriched in polar residues. R1123 carries the omega-N-methylarginine modification. Phosphoserine occurs at positions 1176 and 1185. Residues 1247–1311 (SRWTPVGMAD…FENQGSRPLF (65 aa)) enclose the J domain.

This sequence belongs to the protein kinase superfamily. Ser/Thr protein kinase family. Ubiquitous. Highest in testis.

It is found in the cytoplasm. It localises to the perinuclear region. Its subcellular location is the golgi apparatus. The protein resides in the trans-Golgi network. The protein localises to the cell junction. It is found in the focal adhesion. It localises to the cytoplasmic vesicle. Its subcellular location is the clathrin-coated vesicle. The enzyme catalyses L-seryl-[protein] + ATP = O-phospho-L-seryl-[protein] + ADP + H(+). The catalysed reaction is L-threonyl-[protein] + ATP = O-phospho-L-threonyl-[protein] + ADP + H(+). Its function is as follows. Associates with cyclin G and CDK5. Seems to act as an auxilin homolog that is involved in the uncoating of clathrin-coated vesicles by Hsc70 in non-neuronal cells. Expression oscillates slightly during the cell cycle, peaking at G1. May play a role in clathrin-mediated endocytosis and intracellular trafficking, and in the dynamics of clathrin assembly/disassembly. The protein is Cyclin-G-associated kinase of Homo sapiens (Human).